Here is a 312-residue protein sequence, read N- to C-terminus: Ribonuclease Z (312 aa).

Residues histidine 63, histidine 65, aspartate 67, histidine 68, histidine 141, aspartate 212, and histidine 270 each contribute to the Zn(2+) site. Aspartate 67 serves as the catalytic Proton acceptor.

The protein belongs to the RNase Z family. In terms of assembly, homodimer. Requires Zn(2+) as cofactor.

It catalyses the reaction Endonucleolytic cleavage of RNA, removing extra 3' nucleotides from tRNA precursor, generating 3' termini of tRNAs. A 3'-hydroxy group is left at the tRNA terminus and a 5'-phosphoryl group is left at the trailer molecule.. Zinc phosphodiesterase, which displays some tRNA 3'-processing endonuclease activity. Probably involved in tRNA maturation, by removing a 3'-trailer from precursor tRNA. In Latilactobacillus sakei subsp. sakei (strain 23K) (Lactobacillus sakei subsp. sakei), this protein is Ribonuclease Z.